The following is a 287-amino-acid chain: uncharacterized protein (287 aa).

This is an uncharacterized protein from Archaeoglobus fulgidus (strain ATCC 49558 / DSM 4304 / JCM 9628 / NBRC 100126 / VC-16).